We begin with the raw amino-acid sequence, 319 residues long: tRNA-cytidine(32) 2-sulfurtransferase (319 aa).

The PP-loop motif signature appears at 49–54 (SGGKDS). Residues Cys124, Cys127, and Cys215 each contribute to the [4Fe-4S] cluster site. The tract at residues 276 to 319 (DGDTAFDKEEFRDPAPDADDVEDAPKKRTISILDSRGKESGCGA) is disordered. Composition is skewed to basic and acidic residues over residues 280 to 290 (AFDKEEFRDPA) and 310 to 319 (SRGKESGCGA).

Belongs to the TtcA family. Homodimer. It depends on Mg(2+) as a cofactor. The cofactor is [4Fe-4S] cluster.

Its subcellular location is the cytoplasm. It carries out the reaction cytidine(32) in tRNA + S-sulfanyl-L-cysteinyl-[cysteine desulfurase] + AH2 + ATP = 2-thiocytidine(32) in tRNA + L-cysteinyl-[cysteine desulfurase] + A + AMP + diphosphate + H(+). It functions in the pathway tRNA modification. Catalyzes the ATP-dependent 2-thiolation of cytidine in position 32 of tRNA, to form 2-thiocytidine (s(2)C32). The sulfur atoms are provided by the cysteine/cysteine desulfurase (IscS) system. The sequence is that of tRNA-cytidine(32) 2-sulfurtransferase from Chromobacterium violaceum (strain ATCC 12472 / DSM 30191 / JCM 1249 / CCUG 213 / NBRC 12614 / NCIMB 9131 / NCTC 9757 / MK).